The following is an 805-amino-acid chain: Translation initiation factor IF-2 (805 aa).

Disordered stretches follow at residues 68–89 (VVTE…EKKE) and 141–215 (KEKE…KEKK). A compositionally biased stretch (basic and acidic residues) spans 79 to 89 (VEEKKEEEKKE). The tr-type G domain maps to 306-474 (PRPPIVVVMG…MILLLADILE (169 aa)). Positions 315 to 322 (GHVDHGKT) are G1. A GTP-binding site is contributed by 315-322 (GHVDHGKT). Positions 340 to 344 (GITQH) are G2. A G3 region spans residues 362-365 (DTPG). GTP contacts are provided by residues 362 to 366 (DTPGH) and 416 to 419 (NKID). Residues 416-419 (NKID) are G4. The tract at residues 452–454 (SAK) is G5.

Belongs to the TRAFAC class translation factor GTPase superfamily. Classic translation factor GTPase family. IF-2 subfamily.

Its subcellular location is the cytoplasm. In terms of biological role, one of the essential components for the initiation of protein synthesis. Protects formylmethionyl-tRNA from spontaneous hydrolysis and promotes its binding to the 30S ribosomal subunits. Also involved in the hydrolysis of GTP during the formation of the 70S ribosomal complex. The polypeptide is Translation initiation factor IF-2 (infB) (Aquifex aeolicus (strain VF5)).